Here is a 606-residue protein sequence, read N- to C-terminus: WD repeat-containing protein 1 (606 aa).

WD repeat units lie at residues Glu4 to Ile45, Pro48 to Thr87, Leu93 to Ser135, Ser138 to Gly176, Lys180 to Gly218, Val224 to Val263, Asn270 to Lys306, Lys311 to Ser351, Ser358 to Val408, Leu432 to Ile474, Lys480 to Val518, Ser523 to Leu561, and Thr566 to Ile604. Lys28, Lys81, Lys95, and Lys115 each carry N6-acetyllysine. Tyr238 is modified (phosphotyrosine). Lys480 is modified (N6-acetyllysine).

Belongs to the WD repeat AIP1 family.

It localises to the cytoplasm. The protein resides in the cytoskeleton. The protein localises to the cell projection. Its subcellular location is the podosome. In terms of biological role, induces disassembly of actin filaments in conjunction with ADF/cofilin family proteins. Enhances cofilin-mediated actin severing. Involved in cytokinesis. Involved in chemotactic cell migration by restricting lamellipodial membrane protrusions. Involved in myocardium sarcomere organization. Required for cardiomyocyte growth and maintenance. Involved in megakaryocyte maturation and platelet shedding. Required for the establishment of planar cell polarity (PCP) during follicular epithelium development and for cell shape changes during PCP; the function seems to implicate cooperation with CFL1 and/or DSTN/ADF. Involved in the generation/maintenance of cortical tension. Involved in assembly and maintenance of epithelial apical cell junctions and plays a role in the organization of the perijunctional actomyosin belt. In Bos taurus (Bovine), this protein is WD repeat-containing protein 1 (WDR1).